Here is a 268-residue protein sequence, read N- to C-terminus: MSRLQTRFAQLKQENRAALVTFVTAGDPDYASSLEILKGLPAAGADVIELGMPFTDPMADGPAIQLANIRALDGGQTLARTLQMVREFRSGDSETPLVLMGYFNPIHHYGVERFIAEAKEVGVDGLIVVDLPPEHNEDLCHPAQAAGLDFIRLTTPTTGDQRLPTVLEGSSGFVYYVSVAGVTGANAATLEHVEEAVARLRRHTDLPIGIGFGIRSAEHAAAVARLADGVVVGSALIDRIAKARDNAQAVKDVLALCGELAEGVRNAR.

Residues glutamate 49 and aspartate 60 each act as proton acceptor in the active site.

This sequence belongs to the TrpA family. Tetramer of two alpha and two beta chains.

It catalyses the reaction (1S,2R)-1-C-(indol-3-yl)glycerol 3-phosphate + L-serine = D-glyceraldehyde 3-phosphate + L-tryptophan + H2O. It functions in the pathway amino-acid biosynthesis; L-tryptophan biosynthesis; L-tryptophan from chorismate: step 5/5. The alpha subunit is responsible for the aldol cleavage of indoleglycerol phosphate to indole and glyceraldehyde 3-phosphate. This chain is Tryptophan synthase alpha chain, found in Pseudomonas aeruginosa (strain UCBPP-PA14).